We begin with the raw amino-acid sequence, 520 residues long: Peptide chain release factor 3 (520 aa).

Residues 8–277 form the tr-type G domain; the sequence is ESRKTFAIIS…HAPMPNARQT (270 aa). Residues 17–24, 85–89, and 139–142 each bind GTP; these read SHPDAGKT, DTPGH, and NKLD.

This sequence belongs to the TRAFAC class translation factor GTPase superfamily. Classic translation factor GTPase family. PrfC subfamily.

Its subcellular location is the cytoplasm. In terms of biological role, increases the formation of ribosomal termination complexes and stimulates activities of RF-1 and RF-2. It binds guanine nucleotides and has strong preference for UGA stop codons. It may interact directly with the ribosome. The stimulation of RF-1 and RF-2 is significantly reduced by GTP and GDP, but not by GMP. The sequence is that of Peptide chain release factor 3 from Staphylococcus saprophyticus subsp. saprophyticus (strain ATCC 15305 / DSM 20229 / NCIMB 8711 / NCTC 7292 / S-41).